The chain runs to 465 residues: 3-isopropylmalate dehydratase large subunit (465 aa).

[4Fe-4S] cluster contacts are provided by cysteine 347, cysteine 407, and cysteine 410. The tract at residues 417–443 is disordered; the sequence is TLKPGERSASTSNRNFEGRQGKGGRTH.

Belongs to the aconitase/IPM isomerase family. LeuC type 1 subfamily. In terms of assembly, heterodimer of LeuC and LeuD. Requires [4Fe-4S] cluster as cofactor.

It catalyses the reaction (2R,3S)-3-isopropylmalate = (2S)-2-isopropylmalate. The protein operates within amino-acid biosynthesis; L-leucine biosynthesis; L-leucine from 3-methyl-2-oxobutanoate: step 2/4. In terms of biological role, catalyzes the isomerization between 2-isopropylmalate and 3-isopropylmalate, via the formation of 2-isopropylmaleate. In Thermobifida fusca (strain YX), this protein is 3-isopropylmalate dehydratase large subunit.